A 129-amino-acid polypeptide reads, in one-letter code: UPF0325 protein ECA1027 (129 aa).

The protein belongs to the UPF0325 family.

This chain is UPF0325 protein ECA1027, found in Pectobacterium atrosepticum (strain SCRI 1043 / ATCC BAA-672) (Erwinia carotovora subsp. atroseptica).